We begin with the raw amino-acid sequence, 120 residues long: Putative 15 kDa capsid protein (120 aa).

It localises to the virion. In Orgyia pseudotsugata (Douglas-fir tussock moth), this protein is Putative 15 kDa capsid protein (P15).